A 434-amino-acid chain; its full sequence is ATP-dependent protease ATPase subunit HslU (434 aa).

ATP is bound by residues Ile-18, 60 to 65 (GVGKTE), Asp-247, Glu-312, and Arg-384.

Belongs to the ClpX chaperone family. HslU subfamily. A double ring-shaped homohexamer of HslV is capped on each side by a ring-shaped HslU homohexamer. The assembly of the HslU/HslV complex is dependent on binding of ATP.

Its subcellular location is the cytoplasm. In terms of biological role, ATPase subunit of a proteasome-like degradation complex; this subunit has chaperone activity. The binding of ATP and its subsequent hydrolysis by HslU are essential for unfolding of protein substrates subsequently hydrolyzed by HslV. HslU recognizes the N-terminal part of its protein substrates and unfolds these before they are guided to HslV for hydrolysis. The sequence is that of ATP-dependent protease ATPase subunit HslU from Brucella anthropi (strain ATCC 49188 / DSM 6882 / CCUG 24695 / JCM 21032 / LMG 3331 / NBRC 15819 / NCTC 12168 / Alc 37) (Ochrobactrum anthropi).